The chain runs to 366 residues: 5-hydroxytryptamine receptor 1F (366 aa).

Over 1–24 the chain is Extracellular; that stretch reads MDFLNSSDQNLTSEELLHRMPSKI. Residues Asn-5 and Asn-10 are each glycosylated (N-linked (GlcNAc...) asparagine). Residues 25–49 form a helical membrane-spanning segment; sequence LVSLTLSGLALMTTTINSLVIAAII. Residues 50-59 are Cytoplasmic-facing; the sequence is VTRKLHHPAN. The helical transmembrane segment at 60–81 threads the bilayer; it reads YLICSLAVTDFLVAVLVMPFSI. The Extracellular segment spans residues 82–96; that stretch reads VYIVRESWIMGQVLC. Cys-96 and Cys-172 form a disulfide bridge. A helical membrane pass occupies residues 97–119; it reads DIWLSVDIICCTCSILHLSAIAL. Serotonin contacts are provided by Asp-103 and Cys-107. The DRY motif; important for ligand-induced conformation changes motif lies at 120-122; the sequence is DRY. Topologically, residues 120 to 139 are cytoplasmic; it reads DRYRAITDAVEYARKRTPKQ. A helical membrane pass occupies residues 140–159; the sequence is AGIMITIVWIISVFISMPPL. At 160–178 the chain is on the extracellular side; sequence FWRHQGTSRDDECIIKHDH. Residues 179 to 202 traverse the membrane as a helical segment; it reads IVSTIYSTFGAFYIPLVLILILYY. Residues 203–291 are Cytoplasmic-facing; it reads KIYKAAKTLY…KISGTRERKA (89 aa). A helical transmembrane segment spans residues 292-315; that stretch reads ATTLGLILGAFVICWLPFFVKELV. The Extracellular segment spans residues 316 to 327; it reads VNVCEKCKISEE. Residues 328–350 form a helical membrane-spanning segment; it reads MANFLAWLGYLNSLINPLIYTIF. The NPxxY motif; important for ligand-induced conformation changes and signaling signature appears at 343-347; it reads NPLIY. The Cytoplasmic portion of the chain corresponds to 351–366; the sequence is NEDFKKAFQKLVRCQY.

This sequence belongs to the G-protein coupled receptor 1 family.

The protein localises to the cell membrane. Its function is as follows. G-protein coupled receptor for 5-hydroxytryptamine (serotonin). Also functions as a receptor for various alkaloids and psychoactive substances. Ligand binding causes a conformation change that triggers signaling via guanine nucleotide-binding proteins (G proteins) and modulates the activity of downstream effectors, such as adenylate cyclase. HTR1F is coupled to G(i)/G(o) G alpha proteins and mediates inhibitory neurotransmission by inhibiting adenylate cyclase activity. The polypeptide is 5-hydroxytryptamine receptor 1F (HTR1F) (Cavia porcellus (Guinea pig)).